Consider the following 416-residue polypeptide: Muscle-specific homeobox protein tinman (416 aa).

2 stretches are compositionally biased toward polar residues: residues 1-11 and 18-33; these read MLQHHQQQAQS and YTQS…ADAL. 3 disordered regions span residues 1–33, 246–305, and 391–416; these read MLQH…ADAL, TASN…RKPR, and VMWP…MQHM. A compositionally biased stretch (low complexity) spans 281–295; the sequence is NSISGNSNPGSNSGS. The homeobox DNA-binding region spans 301–360; it reads KRKPRVLFSQAQVLELECRFRLKKYLTGAEREIIAQKLNLSATQVKIWFQNRRYKSKRGD. Residues 397-416 show a composition bias toward low complexity; sequence MQQSQQQQQHHAQQQQMQHM.

It localises to the nucleus. Functionally, required for the development of heart and visceral muscle; for the formation of somatic muscles. Has a crucial function in the early mesodermal subdivisions. The polypeptide is Muscle-specific homeobox protein tinman (tin) (Drosophila melanogaster (Fruit fly)).